Here is a 510-residue protein sequence, read N- to C-terminus: Cobyric acid synthase (510 aa).

The region spanning 262–460 (EIKVGIIKLP…IHGIFENDEW (199 aa)) is the GATase cobBQ-type domain. Cys343 acts as the Nucleophile in catalysis. His452 is an active-site residue.

It belongs to the CobB/CobQ family. CobQ subfamily.

Its pathway is cofactor biosynthesis; adenosylcobalamin biosynthesis. Its function is as follows. Catalyzes amidations at positions B, D, E, and G on adenosylcobyrinic A,C-diamide. NH(2) groups are provided by glutamine, and one molecule of ATP is hydrogenolyzed for each amidation. The polypeptide is Cobyric acid synthase (Prochlorococcus marinus (strain MIT 9515)).